The sequence spans 218 residues: Variable small protein 8 (218 aa).

The N-terminal stretch at 1–18 (MRKRISAIIMTLFMVFMS) is a signal peptide. Residue Cys19 is the site of N-palmitoyl cysteine attachment. Cys19 carries S-diacylglycerol cysteine lipidation.

It belongs to the variable small protein (Vsp) family.

It localises to the cell outer membrane. Functionally, the Vlp and Vsp proteins are antigenically distinct proteins, only one vlp or vsp gene is transcriptionally active at any one time. Switching between these genes is a mechanism of host immune response evasion. This Borrelia hermsii protein is Variable small protein 8.